A 433-amino-acid polypeptide reads, in one-letter code: 3-phosphoshikimate 1-carboxyvinyltransferase (433 aa).

3 residues coordinate 3-phosphoshikimate: K21, S22, and R26. K21 is a phosphoenolpyruvate binding site. Residues G96 and R124 each coordinate phosphoenolpyruvate. 3-phosphoshikimate-binding residues include S167, S168, Q169, S195, D310, and K337. Residue Q169 coordinates phosphoenolpyruvate. The Proton acceptor role is filled by D310. Positions 341, 384, and 410 each coordinate phosphoenolpyruvate.

This sequence belongs to the EPSP synthase family. In terms of assembly, monomer.

It is found in the cytoplasm. It carries out the reaction 3-phosphoshikimate + phosphoenolpyruvate = 5-O-(1-carboxyvinyl)-3-phosphoshikimate + phosphate. It participates in metabolic intermediate biosynthesis; chorismate biosynthesis; chorismate from D-erythrose 4-phosphate and phosphoenolpyruvate: step 6/7. Catalyzes the transfer of the enolpyruvyl moiety of phosphoenolpyruvate (PEP) to the 5-hydroxyl of shikimate-3-phosphate (S3P) to produce enolpyruvyl shikimate-3-phosphate and inorganic phosphate. The protein is 3-phosphoshikimate 1-carboxyvinyltransferase of Clostridium botulinum (strain Eklund 17B / Type B).